The primary structure comprises 397 residues: Protein Brevis radix-like 1 (397 aa).

2 disordered regions span residues 14–37 (GAPP…AGEC) and 105–148 (RAGS…EDDE). The span at 124–148 (AGDEEEEEEEEEEEGTTADGSEDDE) shows a compositional bias: acidic residues. The BRX 1 domain occupies 150 to 205 (KEWVAQVEPGVLITFLSLPEGGNDLKRIRFSREIFNKWQAQRWWAENYEKVMELYN). Disordered regions lie at residues 212–278 (QTPL…QQHH) and 300–342 (SISG…DQER). Residues 220 to 230 (KSEDESLKEDI) are compositionally biased toward basic and acidic residues. Positions 309-320 (SSMDASMRSSSS) are enriched in low complexity. The 56-residue stretch at 342 to 397 (REWVEEDEPGVYITIRALPGGIRELRRVRFSREKFSEMHARLWWEENRARIHDQYL) folds into the BRX 2 domain.

It belongs to the BRX family.

The protein localises to the nucleus. This Oryza sativa subsp. japonica (Rice) protein is Protein Brevis radix-like 1 (BRXL1).